A 105-amino-acid chain; its full sequence is Pyrimidine/purine nucleoside phosphorylase (105 aa).

The protein belongs to the nucleoside phosphorylase PpnP family.

It catalyses the reaction a purine D-ribonucleoside + phosphate = a purine nucleobase + alpha-D-ribose 1-phosphate. It carries out the reaction adenosine + phosphate = alpha-D-ribose 1-phosphate + adenine. The catalysed reaction is cytidine + phosphate = cytosine + alpha-D-ribose 1-phosphate. The enzyme catalyses guanosine + phosphate = alpha-D-ribose 1-phosphate + guanine. It catalyses the reaction inosine + phosphate = alpha-D-ribose 1-phosphate + hypoxanthine. It carries out the reaction thymidine + phosphate = 2-deoxy-alpha-D-ribose 1-phosphate + thymine. The catalysed reaction is uridine + phosphate = alpha-D-ribose 1-phosphate + uracil. The enzyme catalyses xanthosine + phosphate = alpha-D-ribose 1-phosphate + xanthine. Catalyzes the phosphorolysis of diverse nucleosides, yielding D-ribose 1-phosphate and the respective free bases. Can use uridine, adenosine, guanosine, cytidine, thymidine, inosine and xanthosine as substrates. Also catalyzes the reverse reactions. This is Pyrimidine/purine nucleoside phosphorylase from Anaeromyxobacter sp. (strain Fw109-5).